The chain runs to 503 residues: Plant-specific TFIIB-related protein 1 (503 aa).

The segment at 1-33 adopts a TFIIB-type zinc-finger fold; it reads MKCPYCSSAQGRCTTTSSGRSITECSSCGRVME. 4 disordered regions span residues 328–366, 411–431, 436–455, and 468–503; these read PEKA…AKPI, NAMD…LGDK, IYLR…TGIS, and GSSS…HGDF. Residues 333–346 are compositionally biased toward low complexity; it reads PTTTISTTRSTTPR. Residues 355–366 show a composition bias toward basic and acidic residues; sequence FVEKDKPSAKPI.

In terms of processing, ubiquinated. Subsequent degradation by the proteasome pathway. As to expression, widely expressed.

It is found in the plastid. It localises to the chloroplast outer membrane. Its subcellular location is the nucleus. In terms of biological role, plant-specific TFIIB-related protein that may be involved in an intracellular signaling pathway between plastids and the nucleus. May act as general transcription factor (GTF) of RNA polymerase I-dependent transcription and rRNA synthesis. Forms a ternary complex with TBP2 and the rDNA promoter region. The protein is Plant-specific TFIIB-related protein 1 of Arabidopsis thaliana (Mouse-ear cress).